A 1209-amino-acid polypeptide reads, in one-letter code: Neural cell adhesion molecule L1-like protein (1209 aa).

Positions 1-25 (MMELPLCGRGLILSLIFLLLKLSAA) are cleaved as a signal peptide. The Extracellular portion of the chain corresponds to 26-1083 (EIPLSVQQVP…LYDDISTQGW (1058 aa)). Ig-like C2-type domains lie at 35 to 124 (PTIV…EEIE) and 128 to 223 (PGVP…MKLT). 2 cysteine pairs are disulfide-bonded: Cys57–Cys109 and Cys153–Cys204. A glycan (N-linked (GlcNAc...) asparagine) is linked at Asn87. N-linked (GlcNAc...) asparagine glycans are attached at residues Asn225 and Asn299. Ig-like C2-type domains lie at 235-328 (PKLL…VTVE), 331-417 (PRWK…ANID), 423-510 (PLIK…ANLD), and 515-607 (TKLR…TQVT). Intrachain disulfides connect Cys262-Cys310, Cys352-Cys401, Cys445-Cys494, and Cys536-Cys591. N-linked (GlcNAc...) asparagine glycosylation is present at Asn476. The DGEA signature appears at 555 to 558 (DGEA). Asn562 and Asn580 each carry an N-linked (GlcNAc...) asparagine glycan. 4 consecutive Fibronectin type-III domains span residues 614–709 (PPGN…TPPA), 714–807 (NPQN…SGED), 812–914 (APVI…TPEG), and 918–1015 (QPSF…LGEG). The segment at 696–717 (HASLPSDHHETPPAAPDKNPQN) is disordered. N-linked (GlcNAc...) asparagine glycosylation is found at Asn767, Asn822, Asn945, and Asn1027. The helical transmembrane segment at 1084-1104 (FIGLMCAIALLTLILLTICFV) threads the bilayer. The Cytoplasmic portion of the chain corresponds to 1105–1209 (KRNRGGKYSV…SSTATFPLRA (105 aa)). A compositionally biased stretch (basic and acidic residues) spans 1115–1133 (KEKEDLHPDPEVQSAKDET). The tract at residues 1115–1170 (KEKEDLHPDPEVQSAKDETFGEYSDSDEKPLKGSLRSLNRNMQPTESADSLVEYGE) is disordered. Phosphoserine occurs at positions 1148, 1161, and 1181. The span at 1150–1162 (RSLNRNMQPTESA) shows a compositional bias: polar residues. The FIG[AQ]Y signature appears at 1182 to 1186 (FIGAY).

Belongs to the immunoglobulin superfamily. L1/neurofascin/NgCAM family. In terms of assembly, may interact with L1CAM. May interact with ITGB1/ITGA1 heterodimer and ITGB1/ITGA2 heterodimer as well as with ANK3. In terms of processing, cleavage by metalloprotease ADAM8 in the extracellular part generates 2 soluble forms (125 kDa and 165 kDa) in vitro and is inhibited by metalloprotease inhibitors. In brain extracts, these two soluble forms are also present and are dramatically reduced in mice lacking ADAM8. Cleaved by BACE1. N-glycosylated. Contains N-linked oligosaccharides with a sulfated carbohydrate structure type HNK-1 (SO4-3-GlcUABeta1,3GalBeta1,4GlcNAc). Post-translationally, O-glycosylated. As to expression, expressed in the brain, in the cerebellum and in the spinal cord. Detected in the retina and the optic nerve. Expressed in neurons and glial cells in the central nervous system and by Schwann cells in the peripheral nervous system.

The protein localises to the cell membrane. The protein resides in the secreted. Its subcellular location is the extracellular space. It localises to the extracellular matrix. Functionally, extracellular matrix and cell adhesion protein that plays a role in nervous system development and in synaptic plasticity. Both soluble and membranous forms promote neurite outgrowth of cerebellar and hippocampal neurons and suppress neuronal cell death. Plays a role in neuronal positioning of pyramidal neurons as well as in regulation of both the number of interneurons and the efficacy of GABAergic synapses. May play a role in regulating cell migration in nerve regeneration and cortical development. Potentiates integrin-dependent cell migration towards extracellular matrix proteins. Recruits ANK3 to the plasma membrane. The sequence is that of Neural cell adhesion molecule L1-like protein (Chl1) from Mus musculus (Mouse).